The sequence spans 187 residues: UPF0301 protein YqgE (187 aa).

This sequence belongs to the UPF0301 (AlgH) family.

The protein is UPF0301 protein YqgE of Salmonella heidelberg (strain SL476).